Here is a 102-residue protein sequence, read N- to C-terminus: NADH-quinone oxidoreductase subunit K (102 aa).

Helical transmembrane passes span 6–26 (LIGM…GVLA), 30–50 (ILFQ…AFVA), and 63–83 (MLIL…ALLL).

This sequence belongs to the complex I subunit 4L family. As to quaternary structure, NDH-1 is composed of 14 different subunits. Subunits NuoA, H, J, K, L, M, N constitute the membrane sector of the complex.

Its subcellular location is the cell inner membrane. It carries out the reaction a quinone + NADH + 5 H(+)(in) = a quinol + NAD(+) + 4 H(+)(out). Its function is as follows. NDH-1 shuttles electrons from NADH, via FMN and iron-sulfur (Fe-S) centers, to quinones in the respiratory chain. The immediate electron acceptor for the enzyme in this species is believed to be ubiquinone. Couples the redox reaction to proton translocation (for every two electrons transferred, four hydrogen ions are translocated across the cytoplasmic membrane), and thus conserves the redox energy in a proton gradient. This is NADH-quinone oxidoreductase subunit K from Rhodopseudomonas palustris (strain HaA2).